A 106-amino-acid chain; its full sequence is NADH-quinone oxidoreductase subunit K (106 aa).

Transmembrane regions (helical) follow at residues 8-28 (IGIE…VFGV), 35-55 (IIVF…FVAF), and 66-86 (VFVF…LAIL).

The protein belongs to the complex I subunit 4L family. NDH-1 is composed of 14 different subunits. Subunits NuoA, H, J, K, L, M, N constitute the membrane sector of the complex.

The protein resides in the cell inner membrane. It catalyses the reaction a quinone + NADH + 5 H(+)(in) = a quinol + NAD(+) + 4 H(+)(out). Its function is as follows. NDH-1 shuttles electrons from NADH, via FMN and iron-sulfur (Fe-S) centers, to quinones in the respiratory chain. The immediate electron acceptor for the enzyme in this species is believed to be a menaquinone. Couples the redox reaction to proton translocation (for every two electrons transferred, four hydrogen ions are translocated across the cytoplasmic membrane), and thus conserves the redox energy in a proton gradient. The polypeptide is NADH-quinone oxidoreductase subunit K (Flavobacterium johnsoniae (strain ATCC 17061 / DSM 2064 / JCM 8514 / BCRC 14874 / CCUG 350202 / NBRC 14942 / NCIMB 11054 / UW101) (Cytophaga johnsonae)).